A 722-amino-acid chain; its full sequence is Ribosomal RNA large subunit methyltransferase K/L (722 aa).

Residues 55–167 enclose the THUMP domain; that stretch reads TGYRACLWSR…GNEGTLYLDL (113 aa).

This sequence belongs to the methyltransferase superfamily. RlmKL family.

The protein resides in the cytoplasm. The enzyme catalyses guanosine(2445) in 23S rRNA + S-adenosyl-L-methionine = N(2)-methylguanosine(2445) in 23S rRNA + S-adenosyl-L-homocysteine + H(+). It catalyses the reaction guanosine(2069) in 23S rRNA + S-adenosyl-L-methionine = N(2)-methylguanosine(2069) in 23S rRNA + S-adenosyl-L-homocysteine + H(+). In terms of biological role, specifically methylates the guanine in position 2445 (m2G2445) and the guanine in position 2069 (m7G2069) of 23S rRNA. The protein is Ribosomal RNA large subunit methyltransferase K/L of Desulfotalea psychrophila (strain LSv54 / DSM 12343).